The following is a 456-amino-acid chain: Bifunctional protein GlmU (456 aa).

The segment at 1–229 (MSNRPMSVVI…TTETDGVNNR (229 aa)) is pyrophosphorylase. UDP-N-acetyl-alpha-D-glucosamine contacts are provided by residues 11–14 (LAAG), Lys25, Gln76, 81–82 (GT), 103–105 (YGD), Gly140, Glu154, Asn169, and Asn227. Residue Asp105 participates in Mg(2+) binding. Mg(2+) is bound at residue Asn227. Residues 230-250 (LQLATLERVYQAEQAEKLLLS) are linker. The segment at 251–456 (GVMLQDPARF…ASWQRPQKKK (206 aa)) is N-acetyltransferase. Arg333 and Lys351 together coordinate UDP-N-acetyl-alpha-D-glucosamine. His363 (proton acceptor) is an active-site residue. Residues Tyr366 and Asn377 each contribute to the UDP-N-acetyl-alpha-D-glucosamine site. Acetyl-CoA is bound by residues Ala380, 386-387 (NY), Ser405, Ala423, and Arg440.

This sequence in the N-terminal section; belongs to the N-acetylglucosamine-1-phosphate uridyltransferase family. The protein in the C-terminal section; belongs to the transferase hexapeptide repeat family. Homotrimer. Mg(2+) serves as cofactor.

Its subcellular location is the cytoplasm. It carries out the reaction alpha-D-glucosamine 1-phosphate + acetyl-CoA = N-acetyl-alpha-D-glucosamine 1-phosphate + CoA + H(+). It catalyses the reaction N-acetyl-alpha-D-glucosamine 1-phosphate + UTP + H(+) = UDP-N-acetyl-alpha-D-glucosamine + diphosphate. It functions in the pathway nucleotide-sugar biosynthesis; UDP-N-acetyl-alpha-D-glucosamine biosynthesis; N-acetyl-alpha-D-glucosamine 1-phosphate from alpha-D-glucosamine 6-phosphate (route II): step 2/2. Its pathway is nucleotide-sugar biosynthesis; UDP-N-acetyl-alpha-D-glucosamine biosynthesis; UDP-N-acetyl-alpha-D-glucosamine from N-acetyl-alpha-D-glucosamine 1-phosphate: step 1/1. The protein operates within bacterial outer membrane biogenesis; LPS lipid A biosynthesis. Functionally, catalyzes the last two sequential reactions in the de novo biosynthetic pathway for UDP-N-acetylglucosamine (UDP-GlcNAc). The C-terminal domain catalyzes the transfer of acetyl group from acetyl coenzyme A to glucosamine-1-phosphate (GlcN-1-P) to produce N-acetylglucosamine-1-phosphate (GlcNAc-1-P), which is converted into UDP-GlcNAc by the transfer of uridine 5-monophosphate (from uridine 5-triphosphate), a reaction catalyzed by the N-terminal domain. In Erwinia tasmaniensis (strain DSM 17950 / CFBP 7177 / CIP 109463 / NCPPB 4357 / Et1/99), this protein is Bifunctional protein GlmU.